We begin with the raw amino-acid sequence, 506 residues long: Lysine--tRNA ligase (506 aa).

2 residues coordinate Mg(2+): Glu415 and Glu422.

This sequence belongs to the class-II aminoacyl-tRNA synthetase family. As to quaternary structure, homodimer. It depends on Mg(2+) as a cofactor.

Its subcellular location is the cytoplasm. It catalyses the reaction tRNA(Lys) + L-lysine + ATP = L-lysyl-tRNA(Lys) + AMP + diphosphate. The sequence is that of Lysine--tRNA ligase from Erwinia tasmaniensis (strain DSM 17950 / CFBP 7177 / CIP 109463 / NCPPB 4357 / Et1/99).